Consider the following 116-residue polypeptide: Fluoride-specific ion channel FluC 1 (116 aa).

A run of 4 helical transmembrane segments spans residues 2 to 22 (LVLVGLAGAGAAVGALSRYGI), 33 to 53 (PLPIATLFINLTGALLLGWIL), 63 to 83 (IFLGTGIMGGYTTFSTMINEL), and 96 to 116 (WEYFGLSLVGGLVMVYLGTLI). 2 residues coordinate Na(+): G71 and T74.

Belongs to the fluoride channel Fluc/FEX (TC 1.A.43) family.

Its subcellular location is the cell membrane. It catalyses the reaction fluoride(in) = fluoride(out). Its activity is regulated as follows. Na(+) is not transported, but it plays an essential structural role and its presence is essential for fluoride channel function. Its function is as follows. Fluoride-specific ion channel. Important for reducing fluoride concentration in the cell, thus reducing its toxicity. In Lactiplantibacillus plantarum (strain ATCC BAA-793 / NCIMB 8826 / WCFS1) (Lactobacillus plantarum), this protein is Fluoride-specific ion channel FluC 1.